The following is a 785-amino-acid chain: Semaphorin-3F (785 aa).

An N-terminal signal peptide occupies residues 1 to 18; that stretch reads MLVAGLLLWASLLTGAWP. Residues 31 to 545 enclose the Sema domain; it reads RVRLSFKELK…SAVGVTHLSL (515 aa). Residue Asn-53 is glycosylated (N-linked (GlcNAc...) asparagine). Cysteines 104 and 115 form a disulfide. A glycan (N-linked (GlcNAc...) asparagine) is linked at Asn-126. 5 disulfide bridges follow: Cys-133/Cys-142, Cys-300/Cys-412, Cys-324/Cys-372, Cys-548/Cys-566, and Cys-678/Cys-746. In terms of domain architecture, Ig-like C2-type spans 605-690; sequence ANKNAVESVQ…TENNFKHVVT (86 aa). The segment at 752 to 785 is disordered; that stretch reads HVPPSPREAPGAPRSPEPQDQKKPRNRRHHPPDT. Residues 775–785 show a composition bias toward basic residues; sequence PRNRRHHPPDT.

The protein belongs to the semaphorin family. As to expression, expressed abundantly but differentially in a variety of neural and nonneural tissues. There is high expression in mammary gland, kidney, fetal brain, and lung and lower expression in heart and liver.

The protein localises to the secreted. In terms of biological role, may play a role in cell motility and cell adhesion. This chain is Semaphorin-3F (SEMA3F), found in Homo sapiens (Human).